The following is a 484-amino-acid chain: Bifunctional protein HldE (484 aa).

Residues Met1–Ala320 are ribokinase. An ATP-binding site is contributed by Asn195–Glu198. Residue Asp265 is part of the active site. The segment at Phe349–Arg484 is cytidylyltransferase.

It in the N-terminal section; belongs to the carbohydrate kinase PfkB family. In the C-terminal section; belongs to the cytidylyltransferase family. Homodimer.

It carries out the reaction D-glycero-beta-D-manno-heptose 7-phosphate + ATP = D-glycero-beta-D-manno-heptose 1,7-bisphosphate + ADP + H(+). It catalyses the reaction D-glycero-beta-D-manno-heptose 1-phosphate + ATP + H(+) = ADP-D-glycero-beta-D-manno-heptose + diphosphate. The protein operates within nucleotide-sugar biosynthesis; ADP-L-glycero-beta-D-manno-heptose biosynthesis; ADP-L-glycero-beta-D-manno-heptose from D-glycero-beta-D-manno-heptose 7-phosphate: step 1/4. It participates in nucleotide-sugar biosynthesis; ADP-L-glycero-beta-D-manno-heptose biosynthesis; ADP-L-glycero-beta-D-manno-heptose from D-glycero-beta-D-manno-heptose 7-phosphate: step 3/4. Catalyzes the phosphorylation of D-glycero-D-manno-heptose 7-phosphate at the C-1 position to selectively form D-glycero-beta-D-manno-heptose-1,7-bisphosphate. In terms of biological role, catalyzes the ADP transfer from ATP to D-glycero-beta-D-manno-heptose 1-phosphate, yielding ADP-D-glycero-beta-D-manno-heptose. This Gluconacetobacter diazotrophicus (strain ATCC 49037 / DSM 5601 / CCUG 37298 / CIP 103539 / LMG 7603 / PAl5) protein is Bifunctional protein HldE.